We begin with the raw amino-acid sequence, 203 residues long: Inosine triphosphate pyrophosphatase (203 aa).

10-15 (TGNQNK) is a binding site for ITP. Glutamate 40 contributes to the Mg(2+) binding site. ITP is bound by residues lysine 52, 68-69 (DT), lysine 85, 145-148 (FGWD), lysine 168, and 173-174 (HR).

The protein belongs to the HAM1 NTPase family. In terms of assembly, homodimer. Requires Mg(2+) as cofactor. The cofactor is Mn(2+).

Its subcellular location is the cytoplasm. It carries out the reaction ITP + H2O = IMP + diphosphate + H(+). The catalysed reaction is dITP + H2O = dIMP + diphosphate + H(+). It catalyses the reaction XTP + H2O = XMP + diphosphate + H(+). Pyrophosphatase that hydrolyzes non-canonical purine nucleotides such as inosine triphosphate (ITP), deoxyinosine triphosphate (dITP) or xanthosine 5'-triphosphate (XTP) to their respective monophosphate derivatives. The enzyme does not distinguish between the deoxy- and ribose forms. Probably excludes non-canonical purines from RNA and DNA precursor pools, thus preventing their incorporation into RNA and DNA and avoiding chromosomal lesions. The polypeptide is Inosine triphosphate pyrophosphatase (Nematostella vectensis (Starlet sea anemone)).